Here is a 956-residue protein sequence, read N- to C-terminus: Glutamate receptor ionotropic, kainate 4 (956 aa).

A signal peptide spans 1 to 20 (MPRVSAPLVLLPAWLVMVAC). Residues 21–545 (SPHSLRIAAI…YFSFLDPFSP (525 aa)) lie on the Extracellular side of the membrane. 8 N-linked (GlcNAc...) asparagine glycosylation sites follow: asparagine 158, asparagine 220, asparagine 272, asparagine 286, asparagine 323, asparagine 408, asparagine 415, and asparagine 479. 3 residues coordinate L-glutamate: glycine 500, threonine 502, and arginine 507. The helical transmembrane segment at 546 to 566 (GVWLFMLLAYLAVSCVLFLVA) threads the bilayer. The Cytoplasmic segment spans residues 567 to 623 (RLTPYEWYSPHPCAQGRCNLLVNQYSLGNSLWFPVGGFMQQGSTIAPRALSTRCVSG). Residues 624–644 (VWWAFTLIIISSYTANLAAFL) form a helical membrane-spanning segment. Residues 645-804 (TVQRMDVPIE…HRAKGLGMEN (160 aa)) are Extracellular-facing. 3 residues coordinate L-glutamate: serine 674, serine 675, and glutamate 723. Residue asparagine 736 is glycosylated (N-linked (GlcNAc...) asparagine). A helical membrane pass occupies residues 805-825 (IGGIFVVLICGLIVAIFMAML). The Cytoplasmic portion of the chain corresponds to 826–956 (EFLWTLRHSE…EKTTNSSEPE (131 aa)). 2 disordered regions span residues 863 to 889 (RRRA…TLSN) and 931 to 956 (LRAR…SEPE). Over residues 939 to 948 (RSEESLEWEK) the composition is skewed to basic and acidic residues.

This sequence belongs to the glutamate-gated ion channel (TC 1.A.10.1) family. GRIK4 subfamily. As to quaternary structure, homodimer. Can form functional heteromeric receptors with GRIK1, GRIK2 and GRIK3.

The protein localises to the cell membrane. It localises to the postsynaptic cell membrane. The protein resides in the presynaptic cell membrane. Its function is as follows. Ionotropic glutamate receptor that functions as a cation-permeable ligand-gated ion channel. Cannot form functional channels on its own. Shows channel activity only in heteromeric assembly with GRIK1, GRIK2 and GRIK3 subunits. In Homo sapiens (Human), this protein is Glutamate receptor ionotropic, kainate 4 (GRIK4).